Consider the following 277-residue polypeptide: Uridine-cytidine kinase 1 (277 aa).

ATP is bound at residue 24 to 32 (GGTASGKST). Positions 81, 109, 114, 163, 172, and 180 each coordinate substrate. D209 lines the ATP pocket. A disordered region spans residues 241-277 (NHGRSLKRGVAEHGENPSGSSSNLTKRPLLEPSTRPH).

This sequence belongs to the uridine kinase family.

It catalyses the reaction uridine + ATP = UMP + ADP + H(+). The enzyme catalyses cytidine + ATP = CMP + ADP + H(+). Its pathway is pyrimidine metabolism; CTP biosynthesis via salvage pathway; CTP from cytidine: step 1/3. It participates in pyrimidine metabolism; UMP biosynthesis via salvage pathway; UMP from uridine: step 1/1. In terms of biological role, phosphorylates uridine and cytidine to uridine monophosphate and cytidine monophosphate. Does not phosphorylate deoxyribonucleosides or purine ribonucleosides. Can use ATP or GTP as a phosphate donor. The chain is Uridine-cytidine kinase 1 (uck1) from Danio rerio (Zebrafish).